Consider the following 695-residue polypeptide: NADPH--cytochrome P450 reductase (695 aa).

Residues 1 to 8 are Lumenal-facing; that stretch reads MAQLDTLD. A helical membrane pass occupies residues 9 to 31; the sequence is LVVLAVLLVGSVAYFTKGTYWAV. Residues 32–695 lie on the Cytoplasmic side of the membrane; the sequence is AKDPYASTGP…SGSYQEDVWS (664 aa). The Flavodoxin-like domain maps to 66–221; the sequence is CVIFYGSQTG…DFLAWKEPMW (156 aa). Residues 72–77, 123–126, 169–178, and D204 contribute to the FMN site; these read SQTGTA, ATYG, and LGNNTYEHYN. Residues 277–538 enclose the FAD-binding FR-type domain; sequence HNPFIAPIAE…HVRHSNFKLP (262 aa). R296 contributes to the NADP(+) binding site. Residues 451–454, 469–471, and 486–489 each bind FAD; these read RYYS, TAV, and GVTT. Residues T552, 614 to 615, 620 to 624, and E656 each bind NADP(+); these read SR and KVYVQ. Residue W694 participates in FAD binding.

It belongs to the NADPH--cytochrome P450 reductase family. In the N-terminal section; belongs to the flavodoxin family. The protein in the C-terminal section; belongs to the flavoprotein pyridine nucleotide cytochrome reductase family. FAD is required as a cofactor. The cofactor is FMN.

Its subcellular location is the endoplasmic reticulum membrane. It is found in the mitochondrion outer membrane. The protein localises to the cell membrane. It carries out the reaction 2 oxidized [cytochrome P450] + NADPH = 2 reduced [cytochrome P450] + NADP(+) + H(+). Its function is as follows. This enzyme is required for electron transfer from NADP to cytochrome P450 in microsomes. It can also provide electron transfer to heme oxygenase and cytochrome B5. Involved in ergosterol biosynthesis. This is NADPH--cytochrome P450 reductase from Aspergillus niger (strain ATCC MYA-4892 / CBS 513.88 / FGSC A1513).